The chain runs to 230 residues: MLYAFKLGRKLRGEEPWCPEKGGKGGSSDKSAKYAAEAQKYAADLQNQQFNTIMNNLKPFTPLADKYVGSLENLSSLEGQGQALNQYYNSQQYKDLAGQARYQSLAAAEATGGLGSTATSNQLATIAPTLGQQWLSGQMNNYQNLANIGLGALQGQANAGQTYANNMSQISQQSAALAAANANRPSAMQSAIGGGASGAIAGAGLAKLIGSSTPWGAAIGGGLGLLGSLF.

The protein belongs to the podoviruses gp7 family.

Its function is as follows. Component of the phage injection machinery. Required for injection of the phage DNA into the host. The sequence is that of DNA transfer protein gp7 (7) from Enterobacteria phage HK620 (Bacteriophage HK620).